The primary structure comprises 391 residues: Isochorismate synthase EntC (391 aa).

Residues Thr140, Thr142, Val145, and Asp146 each contribute to the Mg(2+) site. The Proton acceptor role is filled by Lys147. Residue Glu197 is the Proton donor of the active site. Gly214, Ser215, Glu241, Ala303, Arg347, and Gly361 together coordinate isochorismate. Glu241 is a binding site for Mg(2+). Position 376 (Glu376) interacts with Mg(2+). Lys380 serves as a coordination point for isochorismate.

It belongs to the isochorismate synthase family. Monomer. Forms a specific pairwise interaction with EntB; this interaction likely facilitates substrate channeling to connect the EntB and EntC active sites. Mg(2+) serves as cofactor.

The catalysed reaction is chorismate = isochorismate. The protein operates within siderophore biosynthesis; enterobactin biosynthesis. Involved in the biosynthesis of the siderophore enterobactin (macrocyclic trimeric lactone of N-(2,3-dihydroxybenzoyl)-serine). Catalyzes the reversible conversion of chorismate to isochorismate. In Escherichia coli O157:H7, this protein is Isochorismate synthase EntC.